The following is a 421-amino-acid chain: Gamma-glutamyl phosphate reductase (421 aa).

Belongs to the gamma-glutamyl phosphate reductase family.

It is found in the cytoplasm. The enzyme catalyses L-glutamate 5-semialdehyde + phosphate + NADP(+) = L-glutamyl 5-phosphate + NADPH + H(+). Its pathway is amino-acid biosynthesis; L-proline biosynthesis; L-glutamate 5-semialdehyde from L-glutamate: step 2/2. Its function is as follows. Catalyzes the NADPH-dependent reduction of L-glutamate 5-phosphate into L-glutamate 5-semialdehyde and phosphate. The product spontaneously undergoes cyclization to form 1-pyrroline-5-carboxylate. The chain is Gamma-glutamyl phosphate reductase from Acinetobacter baylyi (strain ATCC 33305 / BD413 / ADP1).